A 165-amino-acid polypeptide reads, in one-letter code: AP-3 complex subunit sigma (165 aa).

It belongs to the adaptor complexes small subunit family. In terms of assembly, adaptor protein complex 3 (AP-3) is a heterotetramer composed of 2 large adaptins (apl5 and apl6), a medium adaptin (apm3) and a small adaptin (aps3).

The protein localises to the golgi apparatus. The protein resides in the cytoplasmic vesicle membrane. Part of the AP-3 complex, an adaptor-related complex which is not clathrin-associated. The complex is associated with the Golgi region as well as more peripheral structures. It facilitates the budding of vesicles from the Golgi membrane and may be directly involved in trafficking to the vacuole. The sequence is that of AP-3 complex subunit sigma (aps3) from Schizosaccharomyces pombe (strain 972 / ATCC 24843) (Fission yeast).